The chain runs to 101 residues: Ubiquitin-related modifier 1 (101 aa).

At Gly-101 the chain carries 1-thioglycine. A Glycyl lysine isopeptide (Gly-Lys) (interchain with K-? in acceptor proteins) cross-link involves residue Gly-101.

Belongs to the URM1 family. Post-translationally, C-terminal thiocarboxylation occurs in 2 steps, it is first acyl-adenylated (-COAMP) via the hesA/moeB/thiF part of UBA4, then thiocarboxylated (-COSH) via the rhodanese domain of UBA4.

It is found in the cytoplasm. It functions in the pathway tRNA modification; 5-methoxycarbonylmethyl-2-thiouridine-tRNA biosynthesis. In terms of biological role, acts as a sulfur carrier required for 2-thiolation of mcm(5)S(2)U at tRNA wobble positions of cytosolic tRNA(Lys), tRNA(Glu) and tRNA(Gln). Serves as sulfur donor in tRNA 2-thiolation reaction by being thiocarboxylated (-COSH) at its C-terminus by the MOCS3 homolog UBA4. The sulfur is then transferred to tRNA to form 2-thiolation of mcm(5)S(2)U. Prior mcm(5) tRNA modification by the elongator complex is required for 2-thiolation. Also acts as a ubiquitin-like protein (UBL) that is covalently conjugated via an isopeptide bond to lysine residues of target proteins such as AHP1. The thiocarboxylated form serves as substrate for conjugation and oxidative stress specifically induces the formation of UBL-protein conjugates. This Candida albicans (strain SC5314 / ATCC MYA-2876) (Yeast) protein is Ubiquitin-related modifier 1.